An 882-amino-acid polypeptide reads, in one-letter code: DNA mismatch repair protein MutS (882 aa).

627 to 634 (GPNMAGKS) provides a ligand contact to ATP.

This sequence belongs to the DNA mismatch repair MutS family.

Functionally, this protein is involved in the repair of mismatches in DNA. It is possible that it carries out the mismatch recognition step. This protein has a weak ATPase activity. This is DNA mismatch repair protein MutS from Anaeromyxobacter dehalogenans (strain 2CP-1 / ATCC BAA-258).